The sequence spans 170 residues: Protein ECM34 (170 aa).

N45 carries N-linked (GlcNAc...) asparagine glycosylation. A run of 2 helical transmembrane segments spans residues 51–71 (IWLL…GIGG) and 98–118 (TIVI…FKMY).

The protein belongs to the DUP/COS family.

The protein resides in the membrane. In terms of biological role, may be involved in cell wall organization and biogenesis. The protein is Protein ECM34 (ECM34) of Saccharomyces cerevisiae (strain ATCC 204508 / S288c) (Baker's yeast).